Here is a 189-residue protein sequence, read N- to C-terminus: Endoribonuclease YbeY (189 aa).

A compositionally biased stretch (polar residues) spans 1–10 (MKERSSSPGT). The interval 1 to 23 (MKERSSSPGTPDSGRRARPKPAK) is disordered. Zn(2+) is bound by residues His141, His145, and His151.

The protein belongs to the endoribonuclease YbeY family. The cofactor is Zn(2+).

Its subcellular location is the cytoplasm. Its function is as follows. Single strand-specific metallo-endoribonuclease involved in late-stage 70S ribosome quality control and in maturation of the 3' terminus of the 16S rRNA. The chain is Endoribonuclease YbeY from Nitrosospira multiformis (strain ATCC 25196 / NCIMB 11849 / C 71).